Reading from the N-terminus, the 206-residue chain is 3-isopropylmalate dehydratase small subunit (206 aa).

This sequence belongs to the LeuD family. LeuD type 1 subfamily. As to quaternary structure, heterodimer of LeuC and LeuD.

It carries out the reaction (2R,3S)-3-isopropylmalate = (2S)-2-isopropylmalate. It participates in amino-acid biosynthesis; L-leucine biosynthesis; L-leucine from 3-methyl-2-oxobutanoate: step 2/4. Catalyzes the isomerization between 2-isopropylmalate and 3-isopropylmalate, via the formation of 2-isopropylmaleate. The polypeptide is 3-isopropylmalate dehydratase small subunit (Acidobacterium capsulatum (strain ATCC 51196 / DSM 11244 / BCRC 80197 / JCM 7670 / NBRC 15755 / NCIMB 13165 / 161)).